We begin with the raw amino-acid sequence, 1673 residues long: MWRAEGKWLPKTSRKSVSQSVFCGTSTYCVLNTVPPIEDDHGNSNSSHVKIFLPKKLLECLPKCSSLPKERHRWNTNEEIAAYLITFEKHEEWLTTSPKTRPQNGSMILYNRKKVKYRKDGYCWKKRKDGKTTREDHMKLKVQGVECLYGCYVHSSIIPTFHRRCYWLLQNPDIVLVHYLNVPAIEDCGKPCGPILCSINTDKKEWAKWTKEELIGQLKPMFHGIKWTCSNGNSSSGFSVEQLVQQILDSHQTKPQPRTHNCLCTGSLGAGGSVHHKCNSAKHRIISPKVEPRTGGYGSHSEVQHNDVSEGKHEHSHSKGSSREKRNGKVAKPVLLHQSSTEVSSTNQVEVPDTTQSSPVSISSGLNSDPDMVDSPVVTGVSGMAVASVMGSLSQSATVFMSEVTNEAVYTMSPTAGPNHHLLSPDASQGLVLAVSSDGHKFAFPTTGSSESLSMLPTNVSEELVLSTTLDGGRKIPETTMNFDPDCFLNNPKQGQTYGGGGLKAEMVSSNIRHSPPGERSFSFTTVLTKEIKTEDTSFEQQMAKEAYSSSAAAVAASSLTLTAGSSLLPSGGGLSPSTTLEQMDFSAIDSNKDYTSSFSQTGHSPHIHQTPSPSFFLQDASKPLPVEQNTHSSLSDSGGTFVMPTVKTEASSQTSSCSGHVETRIESTSSLHLMQFQANFQAMTAEGEVTMETSQAAEGSEVLLKSGELQACSSEHYLQPETNGVIRSAGGVPILPGNVVQGLYPVAQPSLGNASNMELSLDHFDISFSNQFSDLINDFISVEGGSSTIYGHQLVSGDSTALSQSEDGARAPFTQAEMCLPCCSPQQGSLQLSSSEGGASTMAYMHVAEVVSAASAQGTLGMLQQSGRVFMVTDYSPEWSYPEGGVKVLITGPWQEASNNYSCLFDQISVPASLIQPGVLRCYCPAHDTGLVTLQVAFNNQIISNSVVFEYKARALPTLPSSQHDWLSLDDNQFRMSILERLEQMERRMAEMTGSQQHKQASGGGSSGGGSGSGNGGSQAQCASGTGALGSCFESRVVVVCEKMMSRACWAKSKHLIHSKTFRGMTLLHLAAAQGYATLIQTLIKWRTKHADSIDLELEVDPLNVDHFSCTPLMWACALGHLEAAVVLYKWDRRAISIPDSLGRLPLGIARSRGHVKLAECLEHLQRDEQAQLGQNPRIHCPASEEPSTESWMAQWHSEAISSPEIPKGVTVIASTNPELRRPRSEPSNYYSSESHKDYPAPKKHKLNPEYFQTRQEKLLPTALSLEEPNIRKQSPSSKQSVPETLSPSEGVRDFSRELSPPTPETAAFQASGSQPVGKWNSKDLYIGVSTVQVTGNPKGTSVGKEAAPSQVRPREPMSVLMMANREVVNTELGSYRDSAENEECGQPMDDIQVNMMTLAEHIIEATPDRIKQENFVPMESSGLERTDPATISSTMSWLASYLADADCLPSAAQIRSAYNEPLTPSSNTSLSPVGSPVSEIAFEKPNLPSAADWSEFLSASTSEKVENEFAQLTLSDHEQRELYEAARLVQTAFRKYKGRPLREQQEVAAAVIQRCYRKYKQYALYKKMTQAAILIQSKFRSYYEQKKFQQSRRAAVLIQKYYRSYKKCGKRRQARRTAVIVQQKLRSSLLTKKQDQAARKIMRFLRRCRHSPLVDHRLYKRSERIEKGQGT.

Positions 63 to 188 (KCSSLPKERH…YLNVPAIEDC (126 aa)) form a DNA-binding region, CG-1. The Nuclear localization signal motif lies at 112-119 (RKKVKYRK). The tract at residues 283–375 (HRIISPKVEP…LNSDPDMVDS (93 aa)) is disordered. The span at 302-313 (EVQHNDVSEGKH) shows a compositional bias: basic and acidic residues. Residues 337 to 367 (HQSSTEVSSTNQVEVPDTTQSSPVSISSGLN) show a composition bias toward polar residues. The region spanning 875–953 (DYSPEWSYPE…ISNSVVFEYK (79 aa)) is the IPT/TIG domain. Residues 990 to 1021 (MAEMTGSQQHKQASGGGSSGGGSGSGNGGSQA) form a disordered region. The span at 1003–1018 (SGGGSSGGGSGSGNGG) shows a compositional bias: gly residues. ANK repeat units follow at residues 1064 to 1093 (RGMT…KHAD), 1109 to 1129 (FSCT…AVVL), and 1143 to 1172 (LGRL…DEQA). Disordered stretches follow at residues 1215 to 1246 (ASTN…PKKH) and 1264 to 1317 (ALSL…GSQP). Positions 1273–1289 (RKQSPSSKQSVPETLSP) are enriched in polar residues. 3 IQ domains span residues 1547 to 1576 (QEVA…AAIL), 1577 to 1599 (IQSK…AAVL), and 1600 to 1622 (IQKY…TAVI).

Belongs to the CAMTA family. May interact with calmodulin. In terms of tissue distribution, normally expressed in non-neoplastic adult central nervous system tissues: detected in whole brain, cerebellum, brain cortex, occipital lobe, frontal lobe, temporal lobe, putamen. Expression levels are low in oligodendroglial tumors, and are reduced by half in oligodendroglioma and astrocytoma cases with 1p loss of heterozygosity. Detected in neuroblastic-type cultured neuroblastoma cells. Expressed in heart and kidney.

It is found in the nucleus. It localises to the cytoplasm. Functionally, transcriptional activator. The polypeptide is Calmodulin-binding transcription activator 1 (Homo sapiens (Human)).